The chain runs to 264 residues: Thymidylate synthase (264 aa).

Position 21 (Arg-21) interacts with dUMP. His-51 is a binding site for (6R)-5,10-methylene-5,6,7,8-tetrahydrofolate. 126-127 (RR) provides a ligand contact to dUMP. Cys-146 acts as the Nucleophile in catalysis. Residues 166 to 169 (RSAD), Asn-177, and 207 to 209 (HLY) each bind dUMP. Asp-169 provides a ligand contact to (6R)-5,10-methylene-5,6,7,8-tetrahydrofolate. Residue Ala-263 participates in (6R)-5,10-methylene-5,6,7,8-tetrahydrofolate binding.

It belongs to the thymidylate synthase family. Bacterial-type ThyA subfamily. As to quaternary structure, homodimer.

Its subcellular location is the cytoplasm. It catalyses the reaction dUMP + (6R)-5,10-methylene-5,6,7,8-tetrahydrofolate = 7,8-dihydrofolate + dTMP. The protein operates within pyrimidine metabolism; dTTP biosynthesis. Functionally, catalyzes the reductive methylation of 2'-deoxyuridine-5'-monophosphate (dUMP) to 2'-deoxythymidine-5'-monophosphate (dTMP) while utilizing 5,10-methylenetetrahydrofolate (mTHF) as the methyl donor and reductant in the reaction, yielding dihydrofolate (DHF) as a by-product. This enzymatic reaction provides an intracellular de novo source of dTMP, an essential precursor for DNA biosynthesis. This chain is Thymidylate synthase, found in Cupriavidus necator (strain ATCC 17699 / DSM 428 / KCTC 22496 / NCIMB 10442 / H16 / Stanier 337) (Ralstonia eutropha).